Consider the following 201-residue polypeptide: Recombination protein RecR (201 aa).

The segment at 57–72 adopts a C4-type zinc-finger fold; sequence CADCRTFTEQEHCTIC. In terms of domain architecture, Toprim spans 81–176; the sequence is GQICVVESPA…LASRIAHGVP (96 aa).

This sequence belongs to the RecR family.

In terms of biological role, may play a role in DNA repair. It seems to be involved in an RecBC-independent recombinational process of DNA repair. It may act with RecF and RecO. The sequence is that of Recombination protein RecR from Yersinia enterocolitica serotype O:8 / biotype 1B (strain NCTC 13174 / 8081).